Here is a 327-residue protein sequence, read N- to C-terminus: GrpE protein homolog 2, mitochondrial (327 aa).

The transit peptide at 1 to 39 (MLVLRILSRVTRNAGIRSSLSAVTLPARNQTPVFSSRFH) directs the protein to the mitochondrion. Residues 68–140 (SSSTSPESDE…DSESDDDELS (73 aa)) form a disordered region. Basic and acidic residues-rich tracts occupy residues 75–93 (SDEK…EKPT) and 103–113 (SESKDSVTDSA). The span at 130–140 (SDSESDDDELS) shows a compositional bias: acidic residues.

Belongs to the GrpE family. Probable component of the PAM complex, at least composed of SSC1 (mtHsp70), MGE1, TIM44, PAM16/TIM16, PAM17 and PAM18/TIM14. Interacts with SSQ1.

Its subcellular location is the mitochondrion matrix. Functionally, essential component of the PAM complex, a complex required for the translocation of transit peptide-containing proteins from the inner membrane into the mitochondrial matrix in an ATP-dependent manner. Seems to control the nucleotide-dependent binding of mitochondrial HSP70 to substrate proteins. Binds ATP. Interacts with copper ions Cu(2+). Confers thermotolerance to long-term exposure at moderately high temperature (TMHT at 35 degrees Celsius). The sequence is that of GrpE protein homolog 2, mitochondrial from Arabidopsis thaliana (Mouse-ear cress).